Consider the following 948-residue polypeptide: Valine--tRNA ligase (948 aa).

Residues 40–50 (PNVTGSLHMGH) carry the 'HIGH' region motif. Residues 551–555 (KMSKS) carry the 'KMSKS' region motif. Position 554 (Lys-554) interacts with ATP. Residues 879–947 (LIDKGAELAR…LAEQHARISS (69 aa)) adopt a coiled-coil conformation.

Belongs to the class-I aminoacyl-tRNA synthetase family. ValS type 1 subfamily. In terms of assembly, monomer.

It is found in the cytoplasm. The catalysed reaction is tRNA(Val) + L-valine + ATP = L-valyl-tRNA(Val) + AMP + diphosphate. In terms of biological role, catalyzes the attachment of valine to tRNA(Val). As ValRS can inadvertently accommodate and process structurally similar amino acids such as threonine, to avoid such errors, it has a 'posttransfer' editing activity that hydrolyzes mischarged Thr-tRNA(Val) in a tRNA-dependent manner. This is Valine--tRNA ligase from Pseudomonas fluorescens (strain ATCC BAA-477 / NRRL B-23932 / Pf-5).